We begin with the raw amino-acid sequence, 826 residues long: E3 ubiquitin ligase PARAQUAT TOLERANCE 3 (826 aa).

A DWNN domain is found at isoleucine 3–proline 76. Residues cysteine 203–cysteine 216 form a CCHC-type zinc finger. Serine 278 bears the Phosphoserine mark. The segment at cysteine 288–cysteine 326 adopts an RING-type; degenerate zinc-finger fold. Polar residues-rich tracts occupy residues serine 356–glutamine 365, proline 396–lysine 406, and asparagine 435–proline 454. Disordered stretches follow at residues serine 356–lysine 406, asparagine 435–tyrosine 488, and histidine 585–alanine 826. Position 397 is a phosphoserine (serine 397). Residues methionine 588 to arginine 624 show a composition bias toward basic and acidic residues. Residues isoleucine 625–proline 635 show a composition bias toward polar residues. Residues aspartate 651–serine 667 show a composition bias toward basic and acidic residues. 2 short sequence motifs (nuclear localization signal) span residues serine 668–proline 675 and aspartate 695–arginine 702. The span at arginine 680–arginine 706 shows a compositional bias: basic and acidic residues. Over residues phenylalanine 790–arginine 799 the composition is skewed to basic residues. At serine 800 the chain carries Phosphoserine. Residues glycine 809 to alanine 826 are compositionally biased toward basic and acidic residues.

Interacts with PRMT13/PRMT4B in the nucleus. In terms of tissue distribution, expressed constitutively in both shoot and root tissues.

It localises to the nucleus. The enzyme catalyses S-ubiquitinyl-[E2 ubiquitin-conjugating enzyme]-L-cysteine + [acceptor protein]-L-lysine = [E2 ubiquitin-conjugating enzyme]-L-cysteine + N(6)-ubiquitinyl-[acceptor protein]-L-lysine.. Its function is as follows. E3 ubiquitin ligase acting as a negative regulator of oxidative stress tolerance, probably by mediating 26S proteasome-mediated degradation of PRMT13/PRMT4B, thus preventing APX1 and GPX1 accumulation via the reduction of histone H3 methylation (H3R17me2a). Confers sensitivity to cadmium CdCl(2) and salt NaCl stresses. The sequence is that of E3 ubiquitin ligase PARAQUAT TOLERANCE 3 from Arabidopsis thaliana (Mouse-ear cress).